The primary structure comprises 481 residues: RAC-beta serine/threonine-protein kinase (481 aa).

N-acetylmethionine is present on Met1. The region spanning 5–108 (SVIKEGWLHK…WIRAIQMVAN (104 aa)) is the PH domain. Phosphoserine is present on Ser34. A disulfide bond links Cys60 and Cys77. At Ser126 the chain carries Phosphoserine. Residues Ser128 and Ser131 are each glycosylated (O-linked (GlcNAc) serine). The Protein kinase domain occupies 152 to 409 (FDYLKLLGKG…AKEVMEHRFF (258 aa)). ATP contacts are provided by residues 158–166 (LGKGTFGKV) and Lys181. Asp275 acts as the Proton acceptor in catalysis. Mn(2+) is bound by residues Asn280 and Asp293. Thr306 carries O-linked (GlcNAc) threonine glycosylation. Position 309 is a phosphothreonine; by PDPK1 (Thr309). An O-linked (GlcNAc) threonine glycan is attached at Thr313. In terms of domain architecture, AGC-kinase C-terminal spans 410–481 (LSINWQDVVQ…QFSYSASIRE (72 aa)). The residue at position 447 (Ser447) is a Phosphoserine. Thr451 is modified (phosphothreonine). A phosphoserine mark is found at Ser461, Ser474, and Ser478. Ser474 carries O-linked (GlcNAc) serine; alternate glycosylation.

The protein belongs to the protein kinase superfamily. AGC Ser/Thr protein kinase family. RAC subfamily. Interacts with BTBD10. Interacts with KCTD20. Interacts (via PH domain) with MTCP1, TCL1A and TCL1B; this interaction may facilitate AKT2 oligomerization and phosphorylation, hence increasing kinase activity. Interacts with PHB2; this interaction may be important for myogenic differentiation. Interacts (when phosphorylated) with CLIP3; this interaction promotes cell membrane localization. Interacts with WDFY2 (via WD repeats 1-3). Phosphorylation on Thr-309 and Ser-474 is required for full activity. Phosphorylation of the activation loop at Thr-309 by PDPK1/PDK1 is a prerequisite for full activation. Phosphorylated and activated by PDPK1/PDK1 in the presence of phosphatidylinositol 3,4,5-trisphosphate. Phosphorylation by mTORC2 in response to growth factors plays a key role in AKT1 activation: mTORC2 phosphorylates different sites depending on the context, such as Ser-474 or Ser-478, thereby facilitating subsequent phosphorylation of the activation loop by PDPK1/PDK1. Post-translationally, ubiquitinated; undergoes both 'Lys-48'- and 'Lys-63'-linked polyubiquitination. TRAF6-induced 'Lys-63'-linked AKT2 ubiquitination. When fully phosphorylated and translocated into the nucleus, undergoes 'Lys-48'-polyubiquitination catalyzed by TTC3, leading to its degradation by the proteasome. In terms of processing, O-GlcNAcylation at Thr-306 and Thr-313 inhibits activating phosphorylation at Thr-309 via disrupting the interaction between AKT and PDPK1/PDK1. As to expression, expressed in adipocytes and hepatocytes (at protein level). Expressed at low levels in skeletal muscle (at protein level).

It localises to the cytoplasm. Its subcellular location is the nucleus. The protein localises to the cell membrane. The protein resides in the early endosome. The enzyme catalyses L-seryl-[protein] + ATP = O-phospho-L-seryl-[protein] + ADP + H(+). It catalyses the reaction L-threonyl-[protein] + ATP = O-phospho-L-threonyl-[protein] + ADP + H(+). Its activity is regulated as follows. Phosphorylation at Thr-309 (in the kinase domain) and Ser-474 (in the C-terminal regulatory region) is required for full activation. In adipocytes and hepatocytes, the activation is induced by insulin. AKT2 phosphorylation of PKP1 is induced by insulin. Serine/threonine kinase closely related to AKT1 and AKT3. All 3 enzymes, AKT1, AKT2 and AKT3, are collectively known as AKT kinase. AKT regulates many processes including metabolism, proliferation, cell survival, growth and angiogenesis, through the phosphorylation of a range of downstream substrates. Over 100 substrates have been reported so far, although for most of them, the precise AKT kinase catalyzing the reaction was not specified. AKT regulates glucose uptake by mediating insulin-induced translocation of the SLC2A4/GLUT4 glucose transporter to the cell surface. Phosphorylation of PTPN1 at 'Ser-50' negatively modulates its phosphatase activity preventing dephosphorylation of the insulin receptor and the attenuation of insulin signaling. Phosphorylation of TBC1D4 triggers the binding of this effector to inhibitory 14-3-3 proteins, which is required for insulin-stimulated glucose transport. AKT also regulates the storage of glucose in the form of glycogen by phosphorylating GSK3A at 'Ser-21' and GSK3B at 'Ser-9', resulting in inhibition of its kinase activity. Phosphorylation of GSK3 isoforms by AKT is also thought to be one mechanism by which cell proliferation is driven. AKT also regulates cell survival via the phosphorylation of MAP3K5 (apoptosis signal-related kinase). Phosphorylation of 'Ser-83' decreases MAP3K5 kinase activity stimulated by oxidative stress and thereby prevents apoptosis. AKT mediates insulin-stimulated protein synthesis by phosphorylating TSC2 at 'Ser-939' and 'Thr-1462', thereby activating mTORC1 signaling and leading to both phosphorylation of 4E-BP1 and in activation of RPS6KB1. AKT is involved in the phosphorylation of members of the FOXO factors (Forkhead family of transcription factors), leading to binding of 14-3-3 proteins and cytoplasmic localization. In particular, FOXO1 is phosphorylated at 'Thr-24', 'Ser-256' and 'Ser-319'. FOXO3 and FOXO4 are phosphorylated on equivalent sites. AKT has an important role in the regulation of NF-kappa-B-dependent gene transcription and positively regulates the activity of CREB1 (cyclic AMP (cAMP)-response element binding protein). The phosphorylation of CREB1 induces the binding of accessory proteins that are necessary for the transcription of pro-survival genes such as BCL2 and MCL1. AKT phosphorylates 'Ser-454' on ATP citrate lyase (ACLY), thereby potentially regulating ACLY activity and fatty acid synthesis. Activates the 3B isoform of cyclic nucleotide phosphodiesterase (PDE3B) via phosphorylation of 'Ser-273', resulting in reduced cyclic AMP levels and inhibition of lipolysis. Phosphorylates PIKFYVE on 'Ser-318', which results in increased PI(3)P-5 activity. The Rho GTPase-activating protein DLC1 is another substrate and its phosphorylation is implicated in the regulation cell proliferation and cell growth. AKT plays a role as key modulator of the AKT-mTOR signaling pathway controlling the tempo of the process of newborn neurons integration during adult neurogenesis, including correct neuron positioning, dendritic development and synapse formation. Signals downstream of phosphatidylinositol 3-kinase (PI(3)K) to mediate the effects of various growth factors such as platelet-derived growth factor (PDGF), epidermal growth factor (EGF), insulin and insulin-like growth factor 1 (IGF1). AKT mediates the antiapoptotic effects of IGF1. Essential for the SPATA13-mediated regulation of cell migration and adhesion assembly and disassembly. May be involved in the regulation of the placental development. In response to lysophosphatidic acid stimulation, inhibits the ciliogenesis cascade. In this context, phosphorylates WDR44, hence stabilizing its interaction with Rab11 and preventing the formation of the ciliogenic Rab11-FIP3-RAB3IP complex. Also phosphorylates RAB3IP/Rabin8, thus may affect RAB3IP guanine nucleotide exchange factor (GEF) activity toward Rab8, which is important for cilia growth. Phosphorylates PKP1, facilitating its interaction with YWHAG and translocation to the nucleus, ultimately resulting in a reduction in keratinocyte intercellular adhesion. Phosphorylation of PKP1 increases PKP1 protein stability, translocation to the cytoplasm away from desmosome plaques and PKP1-driven cap-dependent translation. In terms of biological role, several AKT2-specific substrates have been identified, including ANKRD2, C2CD5, CLK2 and PITX2. May play a role in myoblast differentiation. In this context, may act through PITX2 phosphorylation. Unphosphorylated PITX2 associates with an ELAVL1/HuR-containing complex, which stabilizes cyclin mRNA and ensuring cell proliferation. Phosphorylation by AKT2 impairs this association, leading to CCND1 mRNA destabilization and progression towards differentiation. Also involved in the negative regulation of myogenesis in response to stress conditions. In this context, acts by phosphorylating ANKRD2. May also be a key regulator of glucose uptake. Regulates insulin-stimulated glucose transport by the increase of glucose transporter GLUT4 translocation from intracellular stores to the plasma membrane. In this context, acts by phosphorylating C2CD5/CDP138 on 'Ser-197' in insulin-stimulated adipocytes. Through the phosphorylation of CLK2 on 'Thr-343', involved in insulin-regulated suppression of hepatic gluconeogenesis. The protein is RAC-beta serine/threonine-protein kinase of Rattus norvegicus (Rat).